Here is a 96-residue protein sequence, read N- to C-terminus: Putative pterin-4-alpha-carbinolamine dehydratase (96 aa).

Belongs to the pterin-4-alpha-carbinolamine dehydratase family.

The catalysed reaction is (4aS,6R)-4a-hydroxy-L-erythro-5,6,7,8-tetrahydrobiopterin = (6R)-L-erythro-6,7-dihydrobiopterin + H2O. This Prochlorococcus marinus (strain MIT 9313) protein is Putative pterin-4-alpha-carbinolamine dehydratase.